An 892-amino-acid chain; its full sequence is Alanine--tRNA ligase (892 aa).

4 residues coordinate Zn(2+): His-574, His-578, Cys-676, and His-680.

It belongs to the class-II aminoacyl-tRNA synthetase family. Zn(2+) serves as cofactor.

It localises to the cytoplasm. It carries out the reaction tRNA(Ala) + L-alanine + ATP = L-alanyl-tRNA(Ala) + AMP + diphosphate. In terms of biological role, catalyzes the attachment of alanine to tRNA(Ala) in a two-step reaction: alanine is first activated by ATP to form Ala-AMP and then transferred to the acceptor end of tRNA(Ala). Also edits incorrectly charged Ser-tRNA(Ala) and Gly-tRNA(Ala) via its editing domain. In Prochlorococcus marinus (strain MIT 9303), this protein is Alanine--tRNA ligase.